We begin with the raw amino-acid sequence, 546 residues long: Probable protein kinase UbiB (546 aa).

One can recognise a Protein kinase domain in the interval 124–502; the sequence is DFEIKPLASA…HVRQGQSRYF (379 aa). ATP is bound by residues 130–138 and lysine 153; that span reads LASASIAQV. The active-site Proton acceptor is aspartate 288. A run of 2 helical transmembrane segments spans residues 501–521 and 522–542; these read YFLG…VSRP and EWGL…FVGW.

It belongs to the ABC1 family. UbiB subfamily.

The protein resides in the cell inner membrane. It functions in the pathway cofactor biosynthesis; ubiquinone biosynthesis [regulation]. Functionally, is probably a protein kinase regulator of UbiI activity which is involved in aerobic coenzyme Q (ubiquinone) biosynthesis. The protein is Probable protein kinase UbiB of Escherichia coli O45:K1 (strain S88 / ExPEC).